We begin with the raw amino-acid sequence, 123 residues long: Large ribosomal subunit protein bL12 (123 aa).

It belongs to the bacterial ribosomal protein bL12 family. Homodimer. Part of the ribosomal stalk of the 50S ribosomal subunit. Forms a multimeric L10(L12)X complex, where L10 forms an elongated spine to which 2 to 4 L12 dimers bind in a sequential fashion. Binds GTP-bound translation factors.

Its function is as follows. Forms part of the ribosomal stalk which helps the ribosome interact with GTP-bound translation factors. Is thus essential for accurate translation. The polypeptide is Large ribosomal subunit protein bL12 (Psychrobacter arcticus (strain DSM 17307 / VKM B-2377 / 273-4)).